Here is a 118-residue protein sequence, read N- to C-terminus: Small ribosomal subunit protein uS13 (118 aa).

Residues H91–K118 are disordered.

Belongs to the universal ribosomal protein uS13 family. Part of the 30S ribosomal subunit. Forms a loose heterodimer with protein S19. Forms two bridges to the 50S subunit in the 70S ribosome.

Its function is as follows. Located at the top of the head of the 30S subunit, it contacts several helices of the 16S rRNA. In the 70S ribosome it contacts the 23S rRNA (bridge B1a) and protein L5 of the 50S subunit (bridge B1b), connecting the 2 subunits; these bridges are implicated in subunit movement. Contacts the tRNAs in the A and P-sites. The polypeptide is Small ribosomal subunit protein uS13 (Pectobacterium atrosepticum (strain SCRI 1043 / ATCC BAA-672) (Erwinia carotovora subsp. atroseptica)).